We begin with the raw amino-acid sequence, 527 residues long: Triostin synthetase I (527 aa).

An ATP-binding site is contributed by 187–188; it reads GG. Residue 230–231 participates in substrate binding; sequence HQ. Residues 300 to 302, Asp406, Arg421, and Lys512 contribute to the ATP site; that span reads SAP. Lys512 is a substrate binding site.

It belongs to the ATP-dependent AMP-binding enzyme family. In terms of assembly, monomer.

Functionally, involved in triostin biosynthesis. Activates quinoxaline-2-carboxylic acid (QA) via catalysis of the ATP-pyrophosphate exchange reaction dependent on QA, and the formation of the corresponding adenylate. Also activates structural analogs of QA such as quinoline-2-carboxylic acid and thieno[3,2-b]pyridine-5-carboxylic acid, but not quinoline-3-carboxylic acid, quinoline-4-carboxylic acid, pyridine-2-carboxylic acid or 2-pyrazinecarboxylic acid. The sequence is that of Triostin synthetase I (trsA) from Streptomyces triostinicus.